A 313-amino-acid polypeptide reads, in one-letter code: Phosphoenolpyruvate phosphomutase (313 aa).

The Nucleophile role is filled by D69.

The protein belongs to the isocitrate lyase/PEP mutase superfamily. PEP mutase family.

It catalyses the reaction phosphoenolpyruvate + H(+) = 3-phosphonopyruvate. The protein operates within secondary metabolite biosynthesis; bialaphos biosynthesis. Formation of a carbon-phosphorus bond by converting phosphoenolpyruvate (PEP) to phosphonopyruvate (P-Pyr). The polypeptide is Phosphoenolpyruvate phosphomutase (bcpB) (Streptomyces hygroscopicus).